We begin with the raw amino-acid sequence, 477 residues long: UTP--glucose-1-phosphate uridylyltransferase (477 aa).

Residue alanine 2 is modified to N-acetylalanine. UTP contacts are provided by residues 92-95, lysine 106, glutamine 169, and glycine 198; that span reads LNGG. 94–95 provides a ligand contact to substrate; sequence GG. Substrate contacts are provided by residues histidine 199 and 227-229; that span reads NSD. The UTP site is built by aspartate 229 and lysine 367.

It belongs to the UDPGP type 1 family. As to quaternary structure, monomer. It depends on Mg(2+) as a cofactor.

It is found in the cytoplasm. It catalyses the reaction alpha-D-glucose 1-phosphate + UTP + H(+) = UDP-alpha-D-glucose + diphosphate. With respect to regulation, inhibition by uncomplexed, free UTP. In terms of biological role, plays a central role as a glucosyl donor in cellular metabolic pathways. In Solanum tuberosum (Potato), this protein is UTP--glucose-1-phosphate uridylyltransferase.